The primary structure comprises 75 residues: Kappa-thalatoxin-Cad2a (75 aa).

An N-terminal signal peptide occupies residues methionine 1–alanine 22. Positions arginine 23–arginine 40 are excised as a propeptide. Residues cysteine 43–cysteine 75 form the ShKT domain. 3 disulfide bridges follow: cysteine 43-cysteine 75, cysteine 52-cysteine 68, and cysteine 57-cysteine 72.

Belongs to the sea anemone type 1 potassium channel toxin family. Type 1a subfamily.

Its subcellular location is the secreted. It is found in the nematocyst. In terms of biological role, inhibits voltage-gated potassium channels (Kv) with higher potency for Kv1.1/KCNA1 and Kv1.3/KCNA3. This chain is Kappa-thalatoxin-Cad2a, found in Cryptodendrum adhaesivum (Adhesive sea anemone).